The chain runs to 181 residues: Neuroblastoma suppressor of tumorigenicity 1 (181 aa).

An N-terminal signal peptide occupies residues 1-16 (MMLRVLVGAVLPAMLL). Intrachain disulfides connect C35/C85, C49/C99, C59/C118, C63/C120, and C82/C123. Residues 35-124 (CEAKNITQIV…ILHCSCQACG (90 aa)) enclose the CTCK domain. The segment at 132 to 181 (LSVYVQGEDGPGSQPGTHPHPHPHPHPGGQTPEPEDPPGAPHTEEEGAED) is disordered.

The protein belongs to the DAN family. Homodimer. As to expression, most abundant in normal lung and meningioma.

Its subcellular location is the secreted. Possible candidate as a tumor suppressor gene of neuroblastoma. May play an important role in preventing cells from entering the final stage (G1/S) of the transformation process. This chain is Neuroblastoma suppressor of tumorigenicity 1 (NBL1), found in Homo sapiens (Human).